The sequence spans 180 residues: uncharacterized protein (180 aa).

Residues 1–93 (MPSSVPKTSI…LPRRRNPGWV (93 aa)) form a disordered region. Low complexity-rich tracts occupy residues 9–25 (SIESLGSPSSLSSSQAS) and 47–64 (LTSSTESLGYLSSLSSSQ).

This is an uncharacterized protein from Homo sapiens (Human).